Here is a 241-residue protein sequence, read N- to C-terminus: Phycocyanobilin:ferredoxin oxidoreductase (241 aa).

Belongs to the HY2 family.

It catalyses the reaction (2R,3Z)-phycocyanobilin + 4 oxidized [2Fe-2S]-[ferredoxin] = biliverdin IXalpha + 4 reduced [2Fe-2S]-[ferredoxin] + 4 H(+). Its function is as follows. Catalyzes the four-electron reduction of biliverdin IX-alpha (2-electron reduction at both the A and D rings); the reaction proceeds via an isolatable 2-electron intermediate, 181,182-dihydrobiliverdin. The chain is Phycocyanobilin:ferredoxin oxidoreductase from Prochlorococcus marinus (strain MIT 9215).